We begin with the raw amino-acid sequence, 276 residues long: Putative hydroxypyruvate isomerase (276 aa).

Active-site proton donor/acceptor residues include Glu150 and Glu249.

The protein belongs to the hyi family.

It catalyses the reaction 3-hydroxypyruvate = 2-hydroxy-3-oxopropanoate. Its function is as follows. Catalyzes the reversible isomerization between hydroxypyruvate and 2-hydroxy-3-oxopropanoate (also termed tartronate semialdehyde). The polypeptide is Putative hydroxypyruvate isomerase (hyi) (Danio rerio (Zebrafish)).